We begin with the raw amino-acid sequence, 543 residues long: Chaperonin GroEL 4 (543 aa).

Residues 29 to 32 (TLGP), 86 to 90 (DGTTT), G411, 476 to 478 (DAA), and D492 each bind ATP.

It belongs to the chaperonin (HSP60) family. In terms of assembly, forms a cylinder of 14 subunits composed of two heptameric rings stacked back-to-back. Interacts with the co-chaperonin GroES.

It is found in the cytoplasm. The enzyme catalyses ATP + H2O + a folded polypeptide = ADP + phosphate + an unfolded polypeptide.. In terms of biological role, together with its co-chaperonin GroES, plays an essential role in assisting protein folding. The GroEL-GroES system forms a nano-cage that allows encapsulation of the non-native substrate proteins and provides a physical environment optimized to promote and accelerate protein folding. This Bradyrhizobium diazoefficiens (strain JCM 10833 / BCRC 13528 / IAM 13628 / NBRC 14792 / USDA 110) protein is Chaperonin GroEL 4.